The sequence spans 312 residues: Glyoxylate/hydroxypyruvate reductase A (312 aa).

Arg227 is an active-site residue. The active-site Proton donor is the His275.

The protein belongs to the D-isomer specific 2-hydroxyacid dehydrogenase family. GhrA subfamily.

It localises to the cytoplasm. It carries out the reaction glycolate + NADP(+) = glyoxylate + NADPH + H(+). It catalyses the reaction (R)-glycerate + NAD(+) = 3-hydroxypyruvate + NADH + H(+). The enzyme catalyses (R)-glycerate + NADP(+) = 3-hydroxypyruvate + NADPH + H(+). Functionally, catalyzes the NADPH-dependent reduction of glyoxylate and hydroxypyruvate into glycolate and glycerate, respectively. The polypeptide is Glyoxylate/hydroxypyruvate reductase A (Escherichia coli (strain 55989 / EAEC)).